Consider the following 263-residue polypeptide: Fructose-bisphosphate aldolase class 1 (263 aa).

Substrate is bound by residues 24–25 (DH), His29, Asp33, and Trp144. The Proton donor role is filled by Tyr146. Substrate is bound by residues Arg148, 177-179 (KIK), 202-204 (SGG), and 231-232 (GR). Catalysis depends on Lys177, which acts as the Schiff-base intermediate with dihydroxyacetone-P.

Belongs to the DeoC/FbaB aldolase family. In terms of assembly, homodecamer (dimer of pentamers).

It localises to the cytoplasm. The catalysed reaction is beta-D-fructose 1,6-bisphosphate = D-glyceraldehyde 3-phosphate + dihydroxyacetone phosphate. Activated by citrate. Functionally, catalyzes the reversible cleavage of fructose 1,6-bisphosphate (FBP) to glyceraldehyde 3-phosphate (GAP) and dihydroxyacetone phosphate (DHAP). The polypeptide is Fructose-bisphosphate aldolase class 1 (fba) (Thermoproteus tenax (strain ATCC 35583 / DSM 2078 / JCM 9277 / NBRC 100435 / Kra 1)).